The sequence spans 1709 residues: MEGSKRDIIENSNNGNNKGVVIEELGETYYTNSKPSTSADCKYFRDSFEFGSNNNNNNNNNNNNNNNNNNNNNNNNNNNNNNNNNNNNEEKSNNETEKTLESNGDTTTTTTTNNNNNNNNNNNNNNNNNNNNNNNNNNNNNNNNNNTNSSNDIYMNSPSSTLSSPGNAGNNLPIGCTKPNVPKSPYSPSPPHLYKSNSTSYLKSSFFSGNGSSSSSSSTTTTNINSNNSNTNTYSTSTNVKKNNSNTNSNTNNNTNGNTNTNSNSNKKNINSNSSDNIIINDTADIMNRRRDRFKSFSWTIGESNSNSKFSELSMISSKCKSIKSEFTPLFETLTVFDESDKIRHSLIQNHYKTLLIQNPASPNRTLLTNLLQRRGHNLTTCPIDINHVLQLLQKESFSLFIFDPNESIINNTSNSISSNEPISLSSSSSYYNNNNSNNNSVNNNNNNNSGNSTNNNSPSSHTPNSPMIFQPIVSNICSNSGGSGNNSPHHIDNNNNSNQQQQQQQQQQQQQQQHQHQQQQQQSSSTTATTNNSCTLNQQQQQQQQQQQQQQQQQQQQQQSQPTTPTQSTQSPTTSISFSKKKNLTINTSFKTSPMSSPKSFNKPSQSPQNIFNNFSNTYNPNNIEFCKILKSKLTEFETVIVLTESTDPSEFCQYIDAGATDYIPQPISPILLDLRLTTCQKLVNNNLHLKKAESLKDATRKMVTCIENSPDCVEIWDPSGHIQYLNLAFSEMTGFARWELLGKEFSNLIDNTEIIPNMWATLTDKKTWNGFIRTRHNNNTLIYFEASISPVLDQFQQILYYNCTKRDVTQKRIDEESKTLEQNKIIEKSRLRLSMMSHDIRTPMSNIIGMADLLLDTSLSQHQHHYLEIIKNSSNTLLTIINDILDISKIEAGKLDIDYESFDFNATVSQVVESMAQRVQSKGLELLSYVDPKIPNILIGPSSRLNQILTNLLGNSLKFTDKGEISICCLLNDETDSEYEIKVDVRDTGIGIKKEALPLLFKAFTQAEGTITRQYGGSGLGLAICKELVHLAFNGEISVESQYGHGSTFTCILKFKKFLPSDSQNLLPASSPLQQQQQQQQHQQQTQFHQHQQQTQFHQHQQQQLQHQQHQQHQQLQQQQQQQQQLQQQLQQHQQHQLQQRQHHQQQLQQQQHHHHQQVHLQQQQQHEHDAQHNQHIQQQQQQQQQQQQQQQQHEHNNNGHHNSHGHNHHGSHHNHNHQHNNNNNNITINKLQHQEKKQKSNEQQLESITENSFSPIVEPMVISDPDTPEALNISQSPSPQSIHNGTTINQQPTSPLNTLGSKFDFSGAKMLFIERNDTSRGNLFKQLLAWNIQLELVEDGESGFRKWKQSIESNSPYSIIIMDLNTPGVDGASLPMRIKKELELMQQHLQQQQEQEQQQQQEQQQSELQKQPDVENKNSSQNNDNNNNNNKSNSSGGNQCIYRSPIIMLMPIQFLNSQLEDNLKDAGVCAILSKPIRMSQLADVFMMYLGPNSEHNNNNNYNNNNGNGYLNGGGGGGGSVNGTGNGTLQVGMSNDGGNGCGVVSFWNKQRRASAEEQEQDPSKLLGKVLVVDDNHINIQILSKMLQTVGCEVDSVLSGADALAKINQSSGDSYDAIFLDIQMPDMDGFQVSRKIREREKKFSLPRVAIIATTANVFKEDQLKCFDAGMDDFISKPIKRAEIKEIIKKYGKNGNHQSGSAYSLYKLS.

Disordered stretches follow at residues 52 to 192, 206 to 276, 413 to 535, and 554 to 615; these read SNNN…SPPH, FFSG…NSSD, TSNS…NNSC, and QQQQ…IFNN. The segment covering 53 to 87 has biased composition (low complexity); the sequence is NNNNNNNNNNNNNNNNNNNNNNNNNNNNNNNNNNN. A compositionally biased stretch (basic and acidic residues) spans 88–100; sequence NEEKSNNETEKTL. A compositionally biased stretch (low complexity) spans 106 to 148; the sequence is TTTTTTTNNNNNNNNNNNNNNNNNNNNNNNNNNNNNNNNNNTN. The span at 149–170 shows a compositional bias: polar residues; it reads SSNDIYMNSPSSTLSSPGNAGN. Low complexity-rich tracts occupy residues 413 to 466, 486 to 535, and 554 to 576; these read TSNS…TPNS, NNSP…NNSC, and QQQQ…PTTS. Residues 585–610 show a composition bias toward polar residues; the sequence is LTINTSFKTSPMSSPKSFNKPSQSPQ. In terms of domain architecture, PAS spans 700-771; sequence ATRKMVTCIE…ATLTDKKTWN (72 aa). A PAC domain is found at 770–822; that stretch reads WNGFIRTRHNNNTLIYFEASISPVLDQFQQILYYNCTKRDVTQKRIDEESKTL. Positions 837-1059 constitute a Histidine kinase domain; sequence MMSHDIRTPM…TFTCILKFKK (223 aa). Histidine 840 bears the Phosphohistidine; by autocatalysis mark. Disordered regions lie at residues 1068-1112 and 1137-1298; these read LLPA…HQQH and QHQL…PTSP. Composition is skewed to low complexity over residues 1075–1112, 1137–1153, and 1176–1194; these read LQQQ…HQQH, QHQL…LQQQ, and NQHI…QQQQ. Residues 1204–1221 show a composition bias toward basic residues; it reads HNSHGHNHHGSHHNHNHQ. Composition is skewed to polar residues over residues 1244–1257 and 1275–1298; these read NEQQ…NSFS and NISQ…PTSP. Response regulatory domains follow at residues 1312 to 1492 and 1570 to 1692; these read KMLF…MMYL and KVLV…KKYG. The residue at position 1366 (aspartate 1366) is a 4-aspartylphosphate. 2 stretches are compositionally biased toward low complexity: residues 1390 to 1412 and 1420 to 1440; these read QHLQ…SELQ and KNSS…SSGG. The interval 1390-1440 is disordered; it reads QHLQQQQEQEQQQQQEQQQSELQKQPDVENKNSSQNNDNNNNNNKSNSSGG. Aspartate 1622 is subject to 4-aspartylphosphate.

Post-translationally, activation probably requires transfer of a phosphate group between a histidine in the kinase core (transmitter) domain and an aspartate of the receiver domain.

The enzyme catalyses ATP + protein L-histidine = ADP + protein N-phospho-L-histidine.. Functionally, acts as a receptor histidine kinase for a signal transduction pathway. This protein undergoes an ATP-dependent autophosphorylation at a conserved histidine residue in the kinase core, and a phosphoryl group is then transferred to a conserved aspartate residue in the receiver domain. The sequence is that of Hybrid signal transduction histidine kinase L (dhkL) from Dictyostelium discoideum (Social amoeba).